A 610-amino-acid chain; its full sequence is Aspartate--tRNA(Asp/Asn) ligase (610 aa).

Glu182 provides a ligand contact to L-aspartate. Residues 206–209 (QLFK) are aspartate. Residue Arg228 coordinates L-aspartate. Residues 228 to 230 (RDE) and Gln237 contribute to the ATP site. L-aspartate is bound at residue His470. Glu506 is an ATP binding site. Arg513 lines the L-aspartate pocket. ATP is bound at residue 558-561 (GLDR).

Belongs to the class-II aminoacyl-tRNA synthetase family. Type 1 subfamily. In terms of assembly, homodimer.

The protein localises to the cytoplasm. The enzyme catalyses tRNA(Asx) + L-aspartate + ATP = L-aspartyl-tRNA(Asx) + AMP + diphosphate. Functionally, aspartyl-tRNA synthetase with relaxed tRNA specificity since it is able to aspartylate not only its cognate tRNA(Asp) but also tRNA(Asn). Reaction proceeds in two steps: L-aspartate is first activated by ATP to form Asp-AMP and then transferred to the acceptor end of tRNA(Asp/Asn). This chain is Aspartate--tRNA(Asp/Asn) ligase, found in Acidobacterium capsulatum (strain ATCC 51196 / DSM 11244 / BCRC 80197 / JCM 7670 / NBRC 15755 / NCIMB 13165 / 161).